Reading from the N-terminus, the 335-residue chain is DNA polymerase beta (335 aa).

K41 participates in a covalent cross-link: Glycyl lysine isopeptide (Lys-Gly) (interchain with G-Cter in ubiquitin). K60 contributes to the K(+) binding site. K60 lines the Na(+) pocket. K61 participates in a covalent cross-link: Glycyl lysine isopeptide (Lys-Gly) (interchain with G-Cter in ubiquitin). K(+)-binding residues include L62 and V65. Residues L62 and V65 each coordinate Na(+). K72 acts as the Nucleophile; Schiff-base intermediate with DNA; for 5'-dRP lyase activity in catalysis. K72 carries the N6-acetyllysine modification. K81 is covalently cross-linked (Glycyl lysine isopeptide (Lys-Gly) (interchain with G-Cter in ubiquitin)). R83 is subject to Omega-N-methylarginine; by PRMT6. 3 residues coordinate K(+): T101, V103, and I106. Positions 101, 103, and 106 each coordinate Na(+). R149 is a dATP binding site. R149 contacts dCTP. R149 is a dGTP binding site. DTTP is bound at residue R149. R152 carries the post-translational modification Omega-N-methylarginine; by PRMT6. 4 residues coordinate dATP: S180, R183, G189, and D190. S180, R183, G189, and D190 together coordinate dCTP. DGTP is bound by residues S180, R183, G189, D190, and D192. DTTP contacts are provided by S180, R183, G189, and D190. Residues 183-192 (RGAESSGDMD) are DNA-binding. Residues D190, D192, and D256 each contribute to the Mg(2+) site.

It belongs to the DNA polymerase type-X family. In terms of assembly, monomer. Binds single-stranded DNA (ssDNA). Interacts with APEX1, LIG1, LIG3, FEN1, PCNA and XRCC1. Interacts with HUWE1/ARF-BP1, STUB1/CHIP and USP47. Interacts with FAM168A. The cofactor is Mg(2+). In terms of processing, methylation by PRMT6 stimulates the polymerase activity by enhancing DNA binding and processivity. Ubiquitinated at Lys-41, Lys-61 and Lys-81: monoubiquitinated by HUWE1/ARF-BP1. Monoubiquitinated protein is then the target of STUB1/CHIP, which catalyzes polyubiquitination from monoubiquitin, leading to degradation by the proteasome. USP47 mediates the deubiquitination of monoubiquitinated protein, preventing polyubiquitination by STUB1/CHIP and its subsequent degradation.

The protein resides in the nucleus. It is found in the cytoplasm. The catalysed reaction is DNA(n) + a 2'-deoxyribonucleoside 5'-triphosphate = DNA(n+1) + diphosphate. It catalyses the reaction a 5'-end 2'-deoxyribose-2'-deoxyribonucleotide-DNA = (2E,4S)-4-hydroxypenten-2-al-5-phosphate + a 5'-end 5'-phospho-2'-deoxyribonucleoside-DNA + H(+). The enzyme catalyses 2'-deoxyribonucleotide-(2'-deoxyribose 5'-phosphate)-2'-deoxyribonucleotide-DNA = a 3'-end 2'-deoxyribonucleotide-(2,3-dehydro-2,3-deoxyribose 5'-phosphate)-DNA + a 5'-end 5'-phospho-2'-deoxyribonucleoside-DNA + H(+). In terms of biological role, repair polymerase that plays a key role in base-excision repair. During this process, the damaged base is excised by specific DNA glycosylases, the DNA backbone is nicked at the abasic site by an apurinic/apyrimidic (AP) endonuclease, and POLB removes 5'-deoxyribose-phosphate from the preincised AP site acting as a 5'-deoxyribose-phosphate lyase (5'-dRP lyase); through its DNA polymerase activity, it adds one nucleotide to the 3' end of the arising single-nucleotide gap. Conducts 'gap-filling' DNA synthesis in a stepwise distributive fashion rather than in a processive fashion as for other DNA polymerases. It is also able to cleave sugar-phosphate bonds 3' to an intact AP site, acting as an AP lyase. This is DNA polymerase beta (POLB) from Homo sapiens (Human).